We begin with the raw amino-acid sequence, 76 residues long: Small ribosomal subunit protein bS18 (76 aa).

This sequence belongs to the bacterial ribosomal protein bS18 family. In terms of assembly, part of the 30S ribosomal subunit. Forms a tight heterodimer with protein bS6.

Its function is as follows. Binds as a heterodimer with protein bS6 to the central domain of the 16S rRNA, where it helps stabilize the platform of the 30S subunit. This is Small ribosomal subunit protein bS18 from Aeromonas hydrophila subsp. hydrophila (strain ATCC 7966 / DSM 30187 / BCRC 13018 / CCUG 14551 / JCM 1027 / KCTC 2358 / NCIMB 9240 / NCTC 8049).